Consider the following 207-residue polypeptide: High mobility group protein B2 (207 aa).

DNA-binding regions (HMG box) lie at residues 9–79 and 95–163; these read PRGK…KNYV and PKRP…AAYR. A cysteine sulfonic acid (-SO3H); alternate mark is found at Cys-23 and Cys-45. Cysteines 23 and 45 form a disulfide. Basic and acidic residues predominate over residues 52-76; sequence MSSKEKGKFEEMAKGDKARYDREMK. The segment at 52 to 102 is disordered; that stretch reads MSSKEKGKFEEMAKGDKARYDREMKNYVPPKGEKKGKKKDPNAPKRPPSAF. Residue Cys-106 is modified to Cysteine sulfonic acid (-SO3H). Residues 162–172 are compositionally biased toward basic and acidic residues; that stretch reads YRAKSKSDAGK. The disordered stretch occupies residues 162–207; sequence YRAKSKSDAGKKGPGRPAGSKKKAEPEEEEEEEEDEEEEEEEEDEE. Residues 187–207 show a composition bias toward acidic residues; the sequence is PEEEEEEEEDEEEEEEEEDEE.

This sequence belongs to the HMGB family. In terms of processing, reduction/oxidation of cysteine residues Cys-23, Cys-45 and Cys-106 and a possible intramolecular disulfide bond involving Cys-23 and Cys-45 give rise to different redox forms with specific functional activities in various cellular compartments: 1- fully reduced HMGB2 (HMGB2C23hC45hC106h), 2- disulfide HMGB2 (HMGB2C23-C45C106h) and 3- sulfonyl HMGB2 (HMGB2C23soC45soC106so).

The protein localises to the nucleus. It is found in the chromosome. Its subcellular location is the cytoplasm. The protein resides in the secreted. Functionally, multifunctional protein with various roles in different cellular compartments. May act in a redox sensitive manner. Associates with chromatin and binds DNA with a preference to non-canonical DNA structures such as single-stranded DNA. Can bent DNA and enhance DNA flexibility by looping thus providing a mechanism to promote activities on various gene promoters. Proposed to be involved in the innate immune response to nucleic acids by acting as a cytoplasmic promiscuous immunogenic DNA/RNA sensor. Involved in inflammatory response to antigenic stimulus coupled with pro-inflammatory activity. The chain is High mobility group protein B2 (HMGB2) from Gallus gallus (Chicken).